The chain runs to 747 residues: Cysteine--tRNA ligase, cytoplasmic (747 aa).

Positions 1-26 are disordered; it reads MTESWEQGKGRRTQPPWSAPNTNEQP. Residues 15–25 are compositionally biased toward polar residues; sequence PPWSAPNTNEQ. Residue Cys-54 participates in Zn(2+) binding. Gly-55 contacts L-cysteine. The 'HIGH' region motif lies at 56–66; sequence PTVYDASHMGH. Residue Thr-95 participates in L-cysteine binding. The 'KIIK' region motif lies at 100–103; the sequence is KIIK. The Zn(2+) site is built by Cys-347, His-372, and Glu-376. His-372 contributes to the L-cysteine binding site. The short motif at 405 to 409 is the 'KMSKS' region element; that stretch reads KMSKS. An ATP-binding site is contributed by Lys-408. Over residues 651–683 the composition is skewed to basic and acidic residues; it reads EEKRKAEEEKQRKKEEAARKKQQQEAAKLEKMK. 2 disordered regions span residues 651–685 and 700–721; these read EEKR…MKIS and FDES…GQTK.

The protein belongs to the class-I aminoacyl-tRNA synthetase family. Homodimer. It depends on Zn(2+) as a cofactor.

The protein localises to the cytoplasm. It catalyses the reaction tRNA(Cys) + L-cysteine + ATP = L-cysteinyl-tRNA(Cys) + AMP + diphosphate. Its function is as follows. Catalyzes the ATP-dependent ligation of cysteine to tRNA(Cys). The polypeptide is Cysteine--tRNA ligase, cytoplasmic (cars1) (Xenopus laevis (African clawed frog)).